Here is a 296-residue protein sequence, read N- to C-terminus: Glycine--tRNA ligase alpha subunit (296 aa).

It belongs to the class-II aminoacyl-tRNA synthetase family. In terms of assembly, tetramer of two alpha and two beta subunits.

It localises to the cytoplasm. It carries out the reaction tRNA(Gly) + glycine + ATP = glycyl-tRNA(Gly) + AMP + diphosphate. The sequence is that of Glycine--tRNA ligase alpha subunit from Desulfitobacterium hafniense (strain Y51).